A 211-amino-acid chain; its full sequence is Large ribosomal subunit protein uL3 (211 aa).

This sequence belongs to the universal ribosomal protein uL3 family. As to quaternary structure, part of the 50S ribosomal subunit. Forms a cluster with proteins L14 and L19.

Functionally, one of the primary rRNA binding proteins, it binds directly near the 3'-end of the 23S rRNA, where it nucleates assembly of the 50S subunit. This chain is Large ribosomal subunit protein uL3, found in Halothermothrix orenii (strain H 168 / OCM 544 / DSM 9562).